We begin with the raw amino-acid sequence, 518 residues long: Putative malate dehydrogenase 1B (518 aa).

It belongs to the LDH/MDH superfamily. MDH type 2 family.

The sequence is that of Putative malate dehydrogenase 1B (MDH1B) from Homo sapiens (Human).